A 353-amino-acid chain; its full sequence is MKFLDEAKVYIRSGDGGNGCVAFRREKFIEFGGPNGGNGGRGGDIIVEAADGLNTLIDYRYQQHFKAQKGGNGMGSDRHGAGGKDIVMKVPVGTQIFDEDKETLIHDFTKVGERFVLAKGGNGGFGNAHFKSSTNRAPRHANPGLPGEERWIWLRLKLIADAGLVGLPNAGKSTFLSKVSAAKPKIADYPFTTLHPQLGVVNSDGREFVLADIPGLIEGAHEGAGLGDRFLGHIERCRVLLHLIDATCEHAGKAYKTVRGELEAYAETLVDKIEIVALNKIDAVEPDELKKQKDRLKRAAKKTPLLLSGVTGQGVPEALRALVAVIGEAPVSDKAIGTADNPAEAKPWAPQDA.

Positions 1–159 constitute an Obg domain; sequence MKFLDEAKVY…RWIWLRLKLI (159 aa). The region spanning 160-327 is the OBG-type G domain; that stretch reads ADAGLVGLPN…ALRALVAVIG (168 aa). Residues 166–173, 191–195, 212–215, 279–282, and 308–310 each bind GTP; these read GLPNAGKS, FTTLH, DIPG, NKID, and SGV. Residues S173 and T193 each contribute to the Mg(2+) site.

The protein belongs to the TRAFAC class OBG-HflX-like GTPase superfamily. OBG GTPase family. As to quaternary structure, monomer. The cofactor is Mg(2+).

Its subcellular location is the cytoplasm. In terms of biological role, an essential GTPase which binds GTP, GDP and possibly (p)ppGpp with moderate affinity, with high nucleotide exchange rates and a fairly low GTP hydrolysis rate. Plays a role in control of the cell cycle, stress response, ribosome biogenesis and in those bacteria that undergo differentiation, in morphogenesis control. This Rhodopseudomonas palustris (strain ATCC BAA-98 / CGA009) protein is GTPase Obg.